We begin with the raw amino-acid sequence, 108 residues long: Protein RnfH (108 aa).

A disordered region spans residues 86–108 (ARRRRAEKAKEEGRANKVTGGRA).

It belongs to the UPF0125 (RnfH) family.

This Pseudoalteromonas atlantica (strain T6c / ATCC BAA-1087) protein is Protein RnfH.